A 434-amino-acid chain; its full sequence is Glutamyl-tRNA reductase (434 aa).

Substrate-binding positions include 49–52 (TCNR), Ser-109, 114–116 (EPQ), and Gln-120. Residue Cys-50 is the Nucleophile of the active site. An NADP(+)-binding site is contributed by 189-194 (GAGEMC).

This sequence belongs to the glutamyl-tRNA reductase family. In terms of assembly, homodimer.

It catalyses the reaction (S)-4-amino-5-oxopentanoate + tRNA(Glu) + NADP(+) = L-glutamyl-tRNA(Glu) + NADPH + H(+). Its pathway is porphyrin-containing compound metabolism; protoporphyrin-IX biosynthesis; 5-aminolevulinate from L-glutamyl-tRNA(Glu): step 1/2. Catalyzes the NADPH-dependent reduction of glutamyl-tRNA(Glu) to glutamate 1-semialdehyde (GSA). The polypeptide is Glutamyl-tRNA reductase (Geobacter metallireducens (strain ATCC 53774 / DSM 7210 / GS-15)).